Here is a 196-residue protein sequence, read N- to C-terminus: Late protein I196L (196 aa).

2 tandem repeats follow at residues 28 to 48 and 49 to 70. The stretch at 71-92 is one 3; approximate repeat; it reads SNYLTSAISTNISDKEEDTPFS.

This sequence belongs to the asfivirus I196L family.

This chain is Late protein I196L, found in African swine fever virus (isolate Warthog/Namibia/Wart80/1980) (ASFV).